Reading from the N-terminus, the 228-residue chain is PKHD-type hydroxylase Reut_A2877 (228 aa).

Positions 80–180 (IVYPPMFNRY…RVASFFWIQS (101 aa)) constitute a Fe2OG dioxygenase domain. Residues histidine 98, aspartate 100, and histidine 161 each contribute to the Fe cation site. Residue arginine 171 participates in 2-oxoglutarate binding.

Fe(2+) is required as a cofactor. Requires L-ascorbate as cofactor.

This is PKHD-type hydroxylase Reut_A2877 from Cupriavidus pinatubonensis (strain JMP 134 / LMG 1197) (Cupriavidus necator (strain JMP 134)).